A 220-amino-acid chain; its full sequence is GILT-like protein CBG03282 (220 aa).

Positions 1-22 (MTIIRTLFVYYSFLFILVLCSS) are cleaved as a signal peptide. The N-linked (GlcNAc...) asparagine glycan is linked to Asn131.

It belongs to the GILT family.

The protein localises to the secreted. The chain is GILT-like protein CBG03282 from Caenorhabditis briggsae.